A 179-amino-acid chain; its full sequence is Hypoxanthine phosphoribosyltransferase (179 aa).

Diphosphate contacts are provided by Arg45 and Gly46. Glu101 provides a ligand contact to GMP. IMP is bound at residue Glu101. Mg(2+) contacts are provided by Glu101 and Asp102. Residue Asp105 is the Proton acceptor of the active site. Residues 105 to 110 (DTGYTL), Lys133, and Asp161 contribute to the GMP site. IMP contacts are provided by residues 105–110 (DTGYTL) and Lys133. Residue Arg167 participates in diphosphate binding.

It belongs to the purine/pyrimidine phosphoribosyltransferase family. Homotetramer. Mg(2+) serves as cofactor.

The protein localises to the cytoplasm. It carries out the reaction IMP + diphosphate = hypoxanthine + 5-phospho-alpha-D-ribose 1-diphosphate. The catalysed reaction is GMP + diphosphate = guanine + 5-phospho-alpha-D-ribose 1-diphosphate. It participates in purine metabolism; IMP biosynthesis via salvage pathway; IMP from hypoxanthine: step 1/1. Its function is as follows. Purine salvage pathway enzyme which catalyzes the transfer of the ribosyl-5-phosphate group from 5-phospho-alpha-D-ribose 1-diphosphate (PRPP) to the N9 position of hypoxanthine to yield IMP (inosine 5'-monophosphate). To a lesser extent, can also act on guanine leading to GMP, but shows a highly less efficient activity with xanthine. This Haemophilus influenzae (strain ATCC 51907 / DSM 11121 / KW20 / Rd) protein is Hypoxanthine phosphoribosyltransferase (hpt).